The chain runs to 330 residues: Putative quinone oxidoreductase YhfP (330 aa).

NADP(+) contacts are provided by residues Tyr45, Thr160 to Val163, Thr182 to Asn184, Arg202, Leu248, Ile262, Ser273, and Asn320.

Belongs to the zinc-containing alcohol dehydrogenase family. Quinone oxidoreductase subfamily. Homodimer, or homotetramer.

It is found in the cytoplasm. The sequence is that of Putative quinone oxidoreductase YhfP (yhfP) from Bacillus subtilis (strain 168).